Reading from the N-terminus, the 515-residue chain is Bifunctional purine biosynthesis protein PurH (515 aa).

The MGS-like domain occupies 1–144 (MGRKALISVS…KNHKFVTIIV (144 aa)).

This sequence belongs to the PurH family.

It catalyses the reaction (6R)-10-formyltetrahydrofolate + 5-amino-1-(5-phospho-beta-D-ribosyl)imidazole-4-carboxamide = 5-formamido-1-(5-phospho-D-ribosyl)imidazole-4-carboxamide + (6S)-5,6,7,8-tetrahydrofolate. The enzyme catalyses IMP + H2O = 5-formamido-1-(5-phospho-D-ribosyl)imidazole-4-carboxamide. It participates in purine metabolism; IMP biosynthesis via de novo pathway; 5-formamido-1-(5-phospho-D-ribosyl)imidazole-4-carboxamide from 5-amino-1-(5-phospho-D-ribosyl)imidazole-4-carboxamide (10-formyl THF route): step 1/1. The protein operates within purine metabolism; IMP biosynthesis via de novo pathway; IMP from 5-formamido-1-(5-phospho-D-ribosyl)imidazole-4-carboxamide: step 1/1. The sequence is that of Bifunctional purine biosynthesis protein PurH from Persephonella marina (strain DSM 14350 / EX-H1).